The following is a 372-amino-acid chain: Bifunctional enzyme IspD/IspF (372 aa).

A 2-C-methyl-D-erythritol 4-phosphate cytidylyltransferase region spans residues 1-211 (MLDISLIMLG…SALKAPENEL (211 aa)). Residues 212–372 (FVGSGFDVHE…SLKFYNWTQI (161 aa)) are 2-C-methyl-D-erythritol 2,4-cyclodiphosphate synthase. 2 residues coordinate a divalent metal cation: D218 and H220. 4-CDP-2-C-methyl-D-erythritol 2-phosphate-binding positions include 218 to 220 (DVH) and 244 to 245 (HS). H252 provides a ligand contact to a divalent metal cation. Residues 266-268 (DIG), 271-275 (FPDTD), 342-345 (TTTE), F349, and R352 each bind 4-CDP-2-C-methyl-D-erythritol 2-phosphate.

It in the N-terminal section; belongs to the IspD/TarI cytidylyltransferase family. IspD subfamily. This sequence in the C-terminal section; belongs to the IspF family. A divalent metal cation is required as a cofactor.

The enzyme catalyses 2-C-methyl-D-erythritol 4-phosphate + CTP + H(+) = 4-CDP-2-C-methyl-D-erythritol + diphosphate. The catalysed reaction is 4-CDP-2-C-methyl-D-erythritol 2-phosphate = 2-C-methyl-D-erythritol 2,4-cyclic diphosphate + CMP. The protein operates within isoprenoid biosynthesis; isopentenyl diphosphate biosynthesis via DXP pathway; isopentenyl diphosphate from 1-deoxy-D-xylulose 5-phosphate: step 2/6. It functions in the pathway isoprenoid biosynthesis; isopentenyl diphosphate biosynthesis via DXP pathway; isopentenyl diphosphate from 1-deoxy-D-xylulose 5-phosphate: step 4/6. Functionally, bifunctional enzyme that catalyzes the formation of 4-diphosphocytidyl-2-C-methyl-D-erythritol from CTP and 2-C-methyl-D-erythritol 4-phosphate (MEP) (IspD), and catalyzes the conversion of 4-diphosphocytidyl-2-C-methyl-D-erythritol 2-phosphate (CDP-ME2P) to 2-C-methyl-D-erythritol 2,4-cyclodiphosphate (ME-CPP) with a corresponding release of cytidine 5-monophosphate (CMP) (IspF). The protein is Bifunctional enzyme IspD/IspF of Campylobacter concisus (strain 13826).